Here is a 420-residue protein sequence, read N- to C-terminus: Serine hydroxymethyltransferase (420 aa).

(6S)-5,6,7,8-tetrahydrofolate contacts are provided by residues leucine 121 and 125 to 127; that span reads GHL. Lysine 230 carries the post-translational modification N6-(pyridoxal phosphate)lysine. (6S)-5,6,7,8-tetrahydrofolate-binding positions include glutamate 246 and 354-356; that span reads SPF.

Belongs to the SHMT family. As to quaternary structure, homodimer. Requires pyridoxal 5'-phosphate as cofactor.

It localises to the cytoplasm. It catalyses the reaction (6R)-5,10-methylene-5,6,7,8-tetrahydrofolate + glycine + H2O = (6S)-5,6,7,8-tetrahydrofolate + L-serine. Its pathway is one-carbon metabolism; tetrahydrofolate interconversion. It participates in amino-acid biosynthesis; glycine biosynthesis; glycine from L-serine: step 1/1. In terms of biological role, catalyzes the reversible interconversion of serine and glycine with tetrahydrofolate (THF) serving as the one-carbon carrier. This reaction serves as the major source of one-carbon groups required for the biosynthesis of purines, thymidylate, methionine, and other important biomolecules. Also exhibits THF-independent aldolase activity toward beta-hydroxyamino acids, producing glycine and aldehydes, via a retro-aldol mechanism. This is Serine hydroxymethyltransferase from Rickettsia peacockii (strain Rustic).